Here is a 488-residue protein sequence, read N- to C-terminus: Limb region 1 protein homolog (488 aa).

Over Met-1–Arg-18 the chain is Extracellular. The helical transmembrane segment at Glu-19 to Thr-39 threads the bilayer. Over Arg-40–Phe-61 the chain is Cytoplasmic. Residues Leu-62–Ile-82 form a helical membrane-spanning segment. Residues Ser-83–Asn-109 are Extracellular-facing. A helical transmembrane segment spans residues Leu-110–Leu-130. Topologically, residues Glu-131–Leu-150 are cytoplasmic. Residues Val-151–Ile-171 form a helical membrane-spanning segment. At Asp-172–Glu-186 the chain is on the extracellular side. A helical transmembrane segment spans residues Phe-187 to Cys-207. The Cytoplasmic portion of the chain corresponds to Thr-208–Ala-295. A coiled-coil region spans residues Ile-246–Ala-286. Residues Val-296–Leu-316 form a helical membrane-spanning segment. Topologically, residues Tyr-317–Ser-338 are extracellular. The helical transmembrane segment at Leu-339–Val-359 threads the bilayer. Over Ser-360–Thr-382 the chain is Cytoplasmic. Residues Met-383–Met-403 traverse the membrane as a helical segment. The Extracellular segment spans residues Ser-404–Gly-425. The helical transmembrane segment at Asn-426–Val-446 threads the bilayer. Residues Arg-447–Leu-488 lie on the Cytoplasmic side of the membrane.

Belongs to the LIMR family. As to expression, detected ubiquitously at low levels throughout the developing embryo. Present initially in the limb mesoderm as the limb bud emerges from the body wall and up-regulated along the posterior margin of the developing limb bud with progression of the limb outgrowth. Higher levels are detected in limb buds, otic vesicles and pharyngeal arches. Isoform 1 is detected in lung, spleen, heart, breast muscle, cartilage and liver of the adult tissues. Isoform 3 is detected in adult lung, spleen, heart and breast muscle but not detected in cartilage and liver.

It is found in the membrane. Functionally, putative membrane receptor. The sequence is that of Limb region 1 protein homolog (LMBR1) from Gallus gallus (Chicken).